The sequence spans 236 residues: Small ribosomal subunit protein uS2c (236 aa).

It belongs to the universal ribosomal protein uS2 family.

Its subcellular location is the plastid. The protein localises to the chloroplast. In Nandina domestica (Heavenly bamboo), this protein is Small ribosomal subunit protein uS2c (rps2).